A 216-amino-acid chain; its full sequence is Pyrophosphatase PpaX (216 aa).

The active-site Nucleophile is Asp-9.

The protein belongs to the HAD-like hydrolase superfamily. PpaX family. It depends on Mg(2+) as a cofactor.

The enzyme catalyses diphosphate + H2O = 2 phosphate + H(+). Its function is as follows. Hydrolyzes pyrophosphate formed during P-Ser-HPr dephosphorylation by HPrK/P. Might play a role in controlling the intracellular pyrophosphate pool. The chain is Pyrophosphatase PpaX from Bacillus thuringiensis (strain Al Hakam).